Reading from the N-terminus, the 389-residue chain is Major outer membrane porin (389 aa).

The N-terminal stretch at 1–23 (MKKLLKSALLSAAFAGSVGSLQA) is a signal peptide.

It belongs to the chlamydial porin (CP) (TC 1.B.2) family. In terms of assembly, part of a disulfide cross-linked outer membrane complex (COMC) composed of the major outer membrane porin (MOMP), the small cysteine-rich protein (OmcA) and the large cysteine-rich periplasmic protein (OmcB).

Its subcellular location is the cell outer membrane. In terms of biological role, in elementary bodies (EBs, the infectious stage, which is able to survive outside the host cell) provides the structural integrity of the outer envelope through disulfide cross-links with the small cysteine-rich protein and the large cysteine-rich periplasmic protein. It has been described in publications as the Sarkosyl-insoluble COMC (Chlamydia outer membrane complex), and serves as the functional equivalent of peptidoglycan. Its function is as follows. Permits diffusion of specific solutes through the outer membrane. The polypeptide is Major outer membrane porin (ompA) (Chlamydia pneumoniae (Chlamydophila pneumoniae)).